Consider the following 92-residue polypeptide: Non-specific lipid-transfer protein A (92 aa).

4 cysteine pairs are disulfide-bonded: Cys3-Cys51, Cys13-Cys28, Cys29-Cys74, and Cys49-Cys88.

This sequence belongs to the plant LTP family.

Its function is as follows. Plant non-specific lipid-transfer proteins transfer phospholipids as well as galactolipids across membranes. May play a role in wax or cutin deposition in the cell walls of expanding epidermal cells and certain secretory tissues. The polypeptide is Non-specific lipid-transfer protein A (Ricinus communis (Castor bean)).